Reading from the N-terminus, the 171-residue chain is Mitoferrin-1 (171 aa).

Positions 1 to 40 (MELRRGGVGSQARARRMDGDSRDGGGGCKDAGSEDYENLP) are disordered. Residues 43 to 131 (ASLSTHMTAG…FACYENMKRT (89 aa)) form a Solcar repeat. 3 helical membrane-spanning segments follow: residues 45-64 (LSTH…SVMY), 105-125 (RGLN…FACY), and 143-163 (HLAN…PSTD).

The protein belongs to the mitochondrial carrier (TC 2.A.29) family. As to quaternary structure, interacts with ACB10; this interaction stabilizes SLC25A37 and enhances the function of SLC25A37 to import mitochondrial iron during erythroid differentiation.

Its subcellular location is the mitochondrion inner membrane. The enzyme catalyses Fe(2+)(in) = Fe(2+)(out). Mitochondrial iron transporter that specifically mediates iron uptake in developing erythroid cells, thereby playing an essential role in heme biosynthesis. The sequence is that of Mitoferrin-1 (SLC25A37) from Bos taurus (Bovine).